We begin with the raw amino-acid sequence, 444 residues long: Transcription factor PIF5 (444 aa).

The involved in interaction with phyB stretch occupies residues 26–39 (EDELVELLWRDGQV). Disordered regions lie at residues 154 to 265 (HCGS…NLSE) and 416 to 444 (MLGF…GKIG). Polar residues predominate over residues 155-171 (CGSNQSTNIHQATTLPV). A compositionally biased stretch (basic and acidic residues) spans 175–185 (DRSKNVEERLD). Low complexity predominate over residues 187–197 (SSGGSSGCSYG). The segment covering 224–244 (ESVSQSDIGLTSTDDQTMGNK) has biased composition (polar residues). The segment covering 256–265 (RAAEVHNLSE) has biased composition (basic and acidic residues). One can recognise a bHLH domain in the interval 256-305 (RAAEVHNLSERRRRDRINERMKALQELIPHCSRTDKASILDEAIDYLKSL). Residues 424-437 (GPQSQLSAPATTDS) are compositionally biased toward polar residues. Serine 437 is modified (phosphoserine).

As to quaternary structure, homodimer. Interacts specifically with the Pfr form of phytochrome B and with TOC1/APRR1. May form a heterodimer with PIF3. Interacts with PHYB, CRY1 and CRY2 in the nucleus in response to low blue light (LBL). Interacts with TOPP4. Associates to PTAC12/HMR/PAP5 which acts as a transcriptional coactivator. Post-translationally, phosphorylated. Additional phosphorylations induced within 60 seconds following phytochrome B photoactivation. Dephosphorylated by TOPP4 during photomorphogenesis, leading to subsequent degradation of PIF5 by the proteasomal pathway. As to expression, mainly expressed in leaves and seedlings, and, to a lower extent, in stems, fruits, flowers and roots.

It is found in the nucleus. Its function is as follows. Transcription factor acting negatively in the phytochrome B signaling pathway to promote the shade-avoidance response. Regulates PHYB abundance at the post-transcriptional level, possibly via the ubiquitin-proteasome pathway. Promotes ethylene activity in the dark. May regulate the expression of a subset of genes by binding to the G-box motif. Might be involved in the integration of light-signals to control both circadian and photomorphogenic processes. Activated by CRY1 and CRY2 in response to low blue light (LBL) by direct binding at chromatin on E-box variant 5'-CA[CT]GTG-3' to stimulate specific gene expression to adapt global physiology (e.g. hypocotyl elongation in low blue light). The polypeptide is Transcription factor PIF5 (Arabidopsis thaliana (Mouse-ear cress)).